A 66-amino-acid polypeptide reads, in one-letter code: Large ribosomal subunit protein bL35 (66 aa).

Residues 1 to 16 (MPKQKTHRASAKRFKR) are compositionally biased toward basic residues. The disordered stretch occupies residues 1-21 (MPKQKTHRASAKRFKRTGSGG).

Belongs to the bacterial ribosomal protein bL35 family.

This Streptococcus gordonii (strain Challis / ATCC 35105 / BCRC 15272 / CH1 / DL1 / V288) protein is Large ribosomal subunit protein bL35.